A 20-amino-acid polypeptide reads, in one-letter code: M-poneritoxin-Ng1f (20 aa).

K20 is modified (lysine amide).

As to expression, expressed by the venom gland.

It localises to the secreted. It is found in the target cell membrane. Has activity against Gram-positive bacteria. Has insecticidal and hemolytic activities. May act by disrupting the integrity of the bacterial cell membrane. In Neoponera goeldii (Ponerine ant), this protein is M-poneritoxin-Ng1f.